A 519-amino-acid polypeptide reads, in one-letter code: Acetylcholine receptor subunit gamma (519 aa).

The signal sequence occupies residues 1–22 (MHGGQGPQLLLLLLATCLGAQS). The Extracellular segment spans residues 23-240 (RNQEERLLAD…VVFYLLIQRK (218 aa)). N-linked (GlcNAc...) asparagine glycans are attached at residues Asn-52 and Asn-163. Cys-150 and Cys-164 are oxidised to a cystine. 3 helical membrane passes run 241-265 (PLFY…IYFL), 274-292 (CTVA…FLVA), and 308-329 (YLTF…VLNV). Over 330-476 (SLRSPHTHSM…WLLVGRVLDR (147 aa)) the chain is Cytoplasmic. A helical membrane pass occupies residues 477–497 (VCFLAMLSLFICGTAGIFLMA).

This sequence belongs to the ligand-gated ion channel (TC 1.A.9) family. Acetylcholine receptor (TC 1.A.9.1) subfamily. Gamma/CHRNG sub-subfamily. As to quaternary structure, pentamer of two alpha chains, and one each of the beta, delta, and gamma (in immature muscle) or epsilon (in mature muscle) chains.

It localises to the postsynaptic cell membrane. The protein localises to the cell membrane. The enzyme catalyses K(+)(in) = K(+)(out). It carries out the reaction Na(+)(in) = Na(+)(out). In terms of biological role, after binding acetylcholine, the AChR responds by an extensive change in conformation that affects all subunits and leads to opening of an ion-conducting channel across the plasma membrane. The protein is Acetylcholine receptor subunit gamma (Chrng) of Rattus norvegicus (Rat).